Consider the following 172-residue polypeptide: MIIYRDCISQDEMFSDIYKIREVANGLCLEVEGKMVTRTEGQIDDSLIGGNASAEGPEGEGTEATVITGVDIVINHHLQETSFTKESYKKYIKDYMKAIKARLEEHKPERVKPFMTGAAEQIKHILANFKNYQFFVGENMNPDGMVALLDFREDGVTPYMIFFKDGLEIEKC.

The TCTP domain occupies 1-172; it reads MIIYRDCISQ…FKDGLEIEKC (172 aa). At S46 the chain carries Phosphoserine; by PLK1.

The protein belongs to the TCTP family.

The protein resides in the cytoplasm. Functionally, involved in calcium binding and microtubule stabilization. The polypeptide is Translationally-controlled tumor protein homolog (TPT1) (Gallus gallus (Chicken)).